Here is a 182-residue protein sequence, read N- to C-terminus: Antigenic integral membrane glycoprotein (182 aa).

The N-terminal stretch at 1–35 (MFSFHERMKKKHVTIRVYKHERILVFLFVLFISTT) is a signal peptide. Asn-88 and Asn-120 each carry an N-linked (GlcNAc...) asparagine glycan. The chain crosses the membrane as a helical span at residues 162–180 (EFLMSSCIVITLNLFIFMY). A lipid anchor (S-palmitoyl cysteine) is attached at Cys-168.

The protein resides in the cell membrane. Functionally, major antigen in the surface tegument. The sequence is that of Antigenic integral membrane glycoprotein from Schistosoma mansoni (Blood fluke).